The chain runs to 189 residues: MKAPNMETITESLEKSMMNCSLNDRRRRVVGDGFGRSSSNEHMTPISDRTLELNSHLSLPCHWEQCLDLKTGEIYYINWKNGMRVKEDPRKVMNADPDSGDSYGTVCSEEDSSYYDSEESSSESSPSSRENHKEEEEEEEEEEEEEEDVLVVAGCKACFMYFMVPKLVEDCPKCAAQLLHFDRPHSASS.

The EAR signature appears at 50–55; it reads TLELNS. In terms of domain architecture, WW spans 57 to 91; that stretch reads LSLPCHWEQCLDLKTGEIYYINWKNGMRVKEDPRK. Residues 90–148 form a disordered region; that stretch reads RKVMNADPDSGDSYGTVCSEEDSSYYDSEESSSESSPSSRENHKEEEEEEEEEEEEEED. 2 stretches are compositionally biased toward acidic residues: residues 108-121 and 135-148; these read SEED…EESS and EEEE…EEED.

Interacts with BHLH122/CFLAP1 and BHLH80/CFLAP2. Binds to HDG1. In terms of tissue distribution, mostly observed in roots, flowers and siliques. Expressed in cells differentiated from epidermal cells such as trichomes, stigmatic papillar cells and guard cells, as well as in tissues undergoing abscission and dehiscence.

In terms of biological role, negatively regulates the cuticle development by interacting with the HD-ZIP IV transcription factor HDG1. The protein is Protein CURLY FLAG LEAF 1 of Arabidopsis thaliana (Mouse-ear cress).